The following is a 430-amino-acid chain: Histidinol dehydrogenase (430 aa).

NAD(+) is bound by residues Y131, Q192, and N215. Substrate-binding residues include S238, Q260, and H263. Zn(2+) is bound by residues Q260 and H263. Catalysis depends on proton acceptor residues E328 and H329. Residues H329, D362, E416, and H421 each coordinate substrate. Position 362 (D362) interacts with Zn(2+). H421 provides a ligand contact to Zn(2+).

The protein belongs to the histidinol dehydrogenase family. Zn(2+) serves as cofactor.

The enzyme catalyses L-histidinol + 2 NAD(+) + H2O = L-histidine + 2 NADH + 3 H(+). It participates in amino-acid biosynthesis; L-histidine biosynthesis; L-histidine from 5-phospho-alpha-D-ribose 1-diphosphate: step 9/9. In terms of biological role, catalyzes the sequential NAD-dependent oxidations of L-histidinol to L-histidinaldehyde and then to L-histidine. This is Histidinol dehydrogenase from Acinetobacter baylyi (strain ATCC 33305 / BD413 / ADP1).